The following is a 369-amino-acid chain: Tetraacyldisaccharide 4'-kinase (369 aa).

68–75 (VVGGTGKT) lines the ATP pocket.

It belongs to the LpxK family.

The enzyme catalyses a lipid A disaccharide + ATP = a lipid IVA + ADP + H(+). It participates in glycolipid biosynthesis; lipid IV(A) biosynthesis; lipid IV(A) from (3R)-3-hydroxytetradecanoyl-[acyl-carrier-protein] and UDP-N-acetyl-alpha-D-glucosamine: step 6/6. Functionally, transfers the gamma-phosphate of ATP to the 4'-position of a tetraacyldisaccharide 1-phosphate intermediate (termed DS-1-P) to form tetraacyldisaccharide 1,4'-bis-phosphate (lipid IVA). The protein is Tetraacyldisaccharide 4'-kinase of Chlamydia trachomatis serovar D (strain ATCC VR-885 / DSM 19411 / UW-3/Cx).